Reading from the N-terminus, the 450-residue chain is F-box/FBD/LRR-repeat protein At5g22660 (450 aa).

The region spanning 12 to 58 is the F-box domain; sequence EDRISSLPDHLLSQILSNLPTENAVTTSILSTRWKDLWLSTPVLDID. LRR repeat units follow at residues 157-181 and 294-317; these read LPNL…KFIS and LSSL…LKHE. The FBD domain occupies 364 to 416; it reads EEISLSSSVPKCLQSSLENVEIIRPNYGSGEEMKLSKYFLENSLVLKKFKLCR.

The polypeptide is F-box/FBD/LRR-repeat protein At5g22660 (Arabidopsis thaliana (Mouse-ear cress)).